Consider the following 567-residue polypeptide: Zinc finger protein 512 (567 aa).

The interval 1 to 32 (MSSRLGAVPATSGPTTFKQQRSTRIVGAKNSR) is disordered. Residues 12 to 23 (SGPTTFKQQRST) are compositionally biased toward polar residues. Residues Lys18 and Lys84 each participate in a glycyl lysine isopeptide (Lys-Gly) (interchain with G-Cter in SUMO2) cross-link. The interval 86 to 148 (AATSHVEGSG…QARRIRKEPP (63 aa)) is disordered. Positions 119–130 (KKHKLYGRKQRP) are enriched in basic residues. Residues 197-220 (FTCHHCGKQLRSLAGMKYHVMANH) form a C2H2-type 1 zinc finger. Lys227 participates in a covalent cross-link: Glycyl lysine isopeptide (Lys-Gly) (interchain with G-Cter in SUMO2). Residues 287–310 (LKCHHCGKPYRSKAGLAYHLRSEH) form a C2H2-type 2 zinc finger. Residue Lys333 forms a Glycyl lysine isopeptide (Lys-Gly) (interchain with G-Cter in SUMO2) linkage. A C2H2-type 3; atypical zinc finger spans residues 406 to 430 (IQCPNQGCEAVYSSVSGLKAHLGSC). A C2H2-type 4 zinc finger spans residues 440-463 (YKCLLCQKEFVSESGVKYHINSVH). Residues 486 to 567 (QRQQEEEKRR…PKTNHKRGRK (82 aa)) are disordered. Residues 495 to 508 (RQQHRSRRSLRRRQ) show a composition bias toward basic residues. Basic and acidic residues predominate over residues 523–532 (VGKDQRRNNE). Positions 556–567 (KPPKTNHKRGRK) are enriched in basic residues.

This sequence belongs to the krueppel C2H2-type zinc-finger protein family.

The protein localises to the nucleus. In terms of biological role, may be involved in transcriptional regulation. This chain is Zinc finger protein 512 (ZNF512), found in Homo sapiens (Human).